A 248-amino-acid chain; its full sequence is Triosephosphate isomerase (248 aa).

Residue 9 to 11 (NWK) participates in substrate binding. Histidine 94 serves as the catalytic Electrophile. Residue glutamate 166 is the Proton acceptor of the active site. Substrate contacts are provided by residues glycine 172, serine 212, and 233 to 234 (GG).

This sequence belongs to the triosephosphate isomerase family. As to quaternary structure, homodimer.

It localises to the cytoplasm. The enzyme catalyses D-glyceraldehyde 3-phosphate = dihydroxyacetone phosphate. Its pathway is carbohydrate biosynthesis; gluconeogenesis. The protein operates within carbohydrate degradation; glycolysis; D-glyceraldehyde 3-phosphate from glycerone phosphate: step 1/1. Functionally, involved in the gluconeogenesis. Catalyzes stereospecifically the conversion of dihydroxyacetone phosphate (DHAP) to D-glyceraldehyde-3-phosphate (G3P). This chain is Triosephosphate isomerase, found in Clostridium botulinum (strain Eklund 17B / Type B).